We begin with the raw amino-acid sequence, 636 residues long: Threonine--tRNA ligase (636 aa).

Residues 1-60 enclose the TGS domain; the sequence is MPIINFNNKEILFNYPISIIEIIKKFDKNLSENCIAAKINGKLLDVSEIINYDGSLELVK. Residues 242 to 533 are catalytic; sequence DHRKIGKKLD…ITEEFSGKYP (292 aa). Residues cysteine 333, histidine 384, and histidine 510 each coordinate Zn(2+).

It belongs to the class-II aminoacyl-tRNA synthetase family. Homodimer. It depends on Zn(2+) as a cofactor.

The protein resides in the cytoplasm. The enzyme catalyses tRNA(Thr) + L-threonine + ATP = L-threonyl-tRNA(Thr) + AMP + diphosphate + H(+). Its function is as follows. Catalyzes the attachment of threonine to tRNA(Thr) in a two-step reaction: L-threonine is first activated by ATP to form Thr-AMP and then transferred to the acceptor end of tRNA(Thr). Also edits incorrectly charged L-seryl-tRNA(Thr). The chain is Threonine--tRNA ligase from Wigglesworthia glossinidia brevipalpis.